A 57-amino-acid polypeptide reads, in one-letter code: uncharacterized protein (57 aa).

This is an uncharacterized protein from Dictyostelium discoideum (Social amoeba).